Reading from the N-terminus, the 271-residue chain is 60 kDa heat shock protein, mitochondrial (271 aa).

Residues Ser30 and Ser33 each carry the phosphoserine modification. ATP is bound at residue 50–54 (DGTTT). Position 83 is an N6-acetyllysine (Lys83). 3 positions are modified to N6-acetyllysine; alternate: Lys84, Lys97, and Lys112. An N6-succinyllysine; alternate mark is found at Lys84, Lys97, and Lys112. An N6-acetyllysine modification is found at Lys125. The residue at position 126 (Lys126) is an N6-acetyllysine; alternate. Position 126 is an N6-succinyllysine; alternate (Lys126). Lys145 is modified (N6-acetyllysine). At Lys175 the chain carries N6-succinyllysine. N6-acetyllysine is present on residues Lys188 and Lys237. An ATP-binding site is contributed by Gly257. At Lys270 the chain carries N6-acetyllysine.

Belongs to the chaperonin (HSP60) family. As to quaternary structure, homoheptamer arranged in a ring structure. The functional units of these chaperonins consist of heptameric rings of the large subunit Hsp60, which function as a back-to-back double ring. Interacts with 2 heptameric Hsp10 rings to form the symmetrical football complex. Interacts with HRAS. Interacts with ATAD3A. Interacts with ETFBKMT and EEF1AKMT3. Interacts with MFHAS1. In terms of tissue distribution, detected at higher levels in caput epididymal spermatazoa than in cauda epididymal spermatazoa (at protein level).

Its subcellular location is the mitochondrion matrix. The enzyme catalyses ATP + H2O + a folded polypeptide = ADP + phosphate + an unfolded polypeptide.. Chaperonin implicated in mitochondrial protein import and macromolecular assembly. Together with Hsp10, facilitates the correct folding of imported proteins. May also prevent misfolding and promote the refolding and proper assembly of unfolded polypeptides generated under stress conditions in the mitochondrial matrix. The functional units of these chaperonins consist of heptameric rings of the large subunit Hsp60, which function as a back-to-back double ring. In a cyclic reaction, Hsp60 ring complexes bind one unfolded substrate protein per ring, followed by the binding of ATP and association with 2 heptameric rings of the co-chaperonin Hsp10. This leads to sequestration of the substrate protein in the inner cavity of Hsp60 where, for a certain period of time, it can fold undisturbed by other cell components. Synchronous hydrolysis of ATP in all Hsp60 subunits results in the dissociation of the chaperonin rings and the release of ADP and the folded substrate protein. This chain is 60 kDa heat shock protein, mitochondrial, found in Mesocricetus auratus (Golden hamster).